The primary structure comprises 369 residues: Dual-specificity RNA methyltransferase RlmN (369 aa).

Glu-94 functions as the Proton acceptor in the catalytic mechanism. Residues 113-346 (ESEKWTMCLS…CTIRESRGID (234 aa)) enclose the Radical SAM core domain. An intrachain disulfide couples Cys-120 to Cys-351. Residues Cys-127, Cys-131, and Cys-134 each contribute to the [4Fe-4S] cluster site. S-adenosyl-L-methionine is bound by residues 177–178 (GE), Ser-209, 232–234 (SLH), and Asn-308. Cys-351 serves as the catalytic S-methylcysteine intermediate.

The protein belongs to the radical SAM superfamily. RlmN family. [4Fe-4S] cluster serves as cofactor.

It is found in the cytoplasm. The catalysed reaction is adenosine(2503) in 23S rRNA + 2 reduced [2Fe-2S]-[ferredoxin] + 2 S-adenosyl-L-methionine = 2-methyladenosine(2503) in 23S rRNA + 5'-deoxyadenosine + L-methionine + 2 oxidized [2Fe-2S]-[ferredoxin] + S-adenosyl-L-homocysteine. It catalyses the reaction adenosine(37) in tRNA + 2 reduced [2Fe-2S]-[ferredoxin] + 2 S-adenosyl-L-methionine = 2-methyladenosine(37) in tRNA + 5'-deoxyadenosine + L-methionine + 2 oxidized [2Fe-2S]-[ferredoxin] + S-adenosyl-L-homocysteine. In terms of biological role, specifically methylates position 2 of adenine 2503 in 23S rRNA and position 2 of adenine 37 in tRNAs. m2A2503 modification seems to play a crucial role in the proofreading step occurring at the peptidyl transferase center and thus would serve to optimize ribosomal fidelity. The protein is Dual-specificity RNA methyltransferase RlmN of Helicobacter hepaticus (strain ATCC 51449 / 3B1).